The following is a 573-amino-acid chain: CTP synthase (573 aa).

The interval 1–281 (MGQTRIQART…DAYVVRRLGL (281 aa)) is amidoligase domain. Serine 23 provides a ligand contact to CTP. Serine 23 is a binding site for UTP. ATP is bound by residues 24-29 (SLGKGL) and aspartate 81. The Mg(2+) site is built by aspartate 81 and glutamate 155. CTP is bound by residues 162–164 (DIE), 202–207 (KTKPTQ), and lysine 238. Residues 202–207 (KTKPTQ) and lysine 238 each bind UTP. The Glutamine amidotransferase type-1 domain occupies 306 to 554 (EVALVGKYVD…IAAALKYKLA (249 aa)). Position 369 (glycine 369) interacts with L-glutamine. Cysteine 396 functions as the Nucleophile; for glutamine hydrolysis in the catalytic mechanism. Residues 397 to 400 (LGLQ), glutamate 419, and arginine 480 each bind L-glutamine. Active-site residues include histidine 527 and glutamate 529.

It belongs to the CTP synthase family. Homotetramer.

The catalysed reaction is UTP + L-glutamine + ATP + H2O = CTP + L-glutamate + ADP + phosphate + 2 H(+). It carries out the reaction L-glutamine + H2O = L-glutamate + NH4(+). The enzyme catalyses UTP + NH4(+) + ATP = CTP + ADP + phosphate + 2 H(+). It functions in the pathway pyrimidine metabolism; CTP biosynthesis via de novo pathway; CTP from UDP: step 2/2. With respect to regulation, allosterically activated by GTP, when glutamine is the substrate; GTP has no effect on the reaction when ammonia is the substrate. The allosteric effector GTP functions by stabilizing the protein conformation that binds the tetrahedral intermediate(s) formed during glutamine hydrolysis. Inhibited by the product CTP, via allosteric rather than competitive inhibition. Its function is as follows. Catalyzes the ATP-dependent amination of UTP to CTP with either L-glutamine or ammonia as the source of nitrogen. Regulates intracellular CTP levels through interactions with the four ribonucleotide triphosphates. In Nocardia farcinica (strain IFM 10152), this protein is CTP synthase.